Here is a 132-residue protein sequence, read N- to C-terminus: Holo-[acyl-carrier-protein] synthase (132 aa).

Asp-13 and Glu-63 together coordinate Mg(2+).

The protein belongs to the P-Pant transferase superfamily. AcpS family. Mg(2+) is required as a cofactor.

The protein resides in the cytoplasm. The enzyme catalyses apo-[ACP] + CoA = holo-[ACP] + adenosine 3',5'-bisphosphate + H(+). Functionally, transfers the 4'-phosphopantetheine moiety from coenzyme A to a Ser of acyl-carrier-protein. In Gloeobacter violaceus (strain ATCC 29082 / PCC 7421), this protein is Holo-[acyl-carrier-protein] synthase.